Here is a 33-residue protein sequence, read N- to C-terminus: uncharacterized protein (33 aa).

A disordered region spans residues 1 to 33 (MGSVIKKRRKRMSKKKHRKLLRRTRVQRRKLGK).

This is an uncharacterized protein from Mycobacterium tuberculosis (strain CDC 1551 / Oshkosh).